The sequence spans 438 residues: Glucose-6-phosphate isomerase (438 aa).

Catalysis depends on E289, which acts as the Proton donor. Catalysis depends on residues H310 and K424.

It belongs to the GPI family.

It localises to the cytoplasm. It carries out the reaction alpha-D-glucose 6-phosphate = beta-D-fructose 6-phosphate. Its pathway is carbohydrate biosynthesis; gluconeogenesis. It participates in carbohydrate degradation; glycolysis; D-glyceraldehyde 3-phosphate and glycerone phosphate from D-glucose: step 2/4. In terms of biological role, catalyzes the reversible isomerization of glucose-6-phosphate to fructose-6-phosphate. In Oenococcus oeni (strain ATCC BAA-331 / PSU-1), this protein is Glucose-6-phosphate isomerase.